The sequence spans 496 residues: Glutamyl-tRNA(Gln) amidotransferase subunit A, mitochondrial (496 aa).

Residues Lys75 and Ser162 each act as charge relay system in the active site. The active-site Acyl-ester intermediate is Ser186.

This sequence belongs to the amidase family. GatA subfamily. Subunit of the heterotrimeric GatCAB amidotransferase (AdT) complex, composed of A, B and C subunits.

Its subcellular location is the mitochondrion. The enzyme catalyses L-glutamyl-tRNA(Gln) + L-glutamine + ATP + H2O = L-glutaminyl-tRNA(Gln) + L-glutamate + ADP + phosphate + H(+). Its function is as follows. Allows the formation of correctly charged Gln-tRNA(Gln) through the transamidation of misacylated Glu-tRNA(Gln) in the mitochondria. The reaction takes place in the presence of glutamine and ATP through an activated gamma-phospho-Glu-tRNA(Gln). The protein is Glutamyl-tRNA(Gln) amidotransferase subunit A, mitochondrial of Pediculus humanus subsp. corporis (Body louse).